The sequence spans 340 residues: Ketol-acid reductoisomerase (NADP(+)) (340 aa).

The KARI N-terminal Rossmann domain occupies 3–182 (VQMEYEKDVK…GAARVGLLET (180 aa)). NADP(+)-binding positions include 26 to 29 (YGSQ), R49, S53, and 83 to 86 (DEIQ). H108 is an active-site residue. G134 serves as a coordination point for NADP(+). The KARI C-terminal knotted domain maps to 183-328 (TYKEETEEDL…AELRKAMPFV (146 aa)). Mg(2+)-binding residues include D191, E195, E227, and E231. Substrate is bound at residue S252.

It belongs to the ketol-acid reductoisomerase family. Requires Mg(2+) as cofactor.

It catalyses the reaction (2R)-2,3-dihydroxy-3-methylbutanoate + NADP(+) = (2S)-2-acetolactate + NADPH + H(+). The enzyme catalyses (2R,3R)-2,3-dihydroxy-3-methylpentanoate + NADP(+) = (S)-2-ethyl-2-hydroxy-3-oxobutanoate + NADPH + H(+). Its pathway is amino-acid biosynthesis; L-isoleucine biosynthesis; L-isoleucine from 2-oxobutanoate: step 2/4. The protein operates within amino-acid biosynthesis; L-valine biosynthesis; L-valine from pyruvate: step 2/4. In terms of biological role, involved in the biosynthesis of branched-chain amino acids (BCAA). Catalyzes an alkyl-migration followed by a ketol-acid reduction of (S)-2-acetolactate (S2AL) to yield (R)-2,3-dihydroxy-isovalerate. In the isomerase reaction, S2AL is rearranged via a Mg-dependent methyl migration to produce 3-hydroxy-3-methyl-2-ketobutyrate (HMKB). In the reductase reaction, this 2-ketoacid undergoes a metal-dependent reduction by NADPH to yield (R)-2,3-dihydroxy-isovalerate. In Streptococcus pneumoniae (strain JJA), this protein is Ketol-acid reductoisomerase (NADP(+)).